Here is a 122-residue protein sequence, read N- to C-terminus: Large ribosomal subunit protein bL17 (122 aa).

This sequence belongs to the bacterial ribosomal protein bL17 family. As to quaternary structure, part of the 50S ribosomal subunit. Contacts protein L32.

The sequence is that of Large ribosomal subunit protein bL17 from Staphylococcus epidermidis (strain ATCC 35984 / DSM 28319 / BCRC 17069 / CCUG 31568 / BM 3577 / RP62A).